A 415-amino-acid polypeptide reads, in one-letter code: Probable N-acetyl-gamma-glutamyl-phosphate reductase, chloroplastic (415 aa).

The transit peptide at 1-74 (MGSTALGGGA…SGVKSGEEVR (74 aa)) directs the protein to the chloroplast. Residues 48–68 (VRASVASSPQKQHSPKTSGVK) form a disordered region. The segment covering 56–67 (PQKQHSPKTSGV) has biased composition (polar residues). Cysteine 219 is an active-site residue.

Belongs to the NAGSA dehydrogenase family. Type 1 subfamily. Homotetramer.

It is found in the plastid. The protein localises to the chloroplast. It catalyses the reaction N-acetyl-L-glutamate 5-semialdehyde + phosphate + NADP(+) = N-acetyl-L-glutamyl 5-phosphate + NADPH + H(+). It participates in amino-acid biosynthesis; L-arginine biosynthesis; N(2)-acetyl-L-ornithine from L-glutamate: step 3/4. The polypeptide is Probable N-acetyl-gamma-glutamyl-phosphate reductase, chloroplastic (Oryza sativa subsp. japonica (Rice)).